The sequence spans 490 residues: MAKVRTRFAPSPTGRMHVGNLRTALYEYLIAKHEGGDFILRIEDTDQERLVEGATEIIYRTIAKTGLIHDEGPDKDKGFGPYVQSERQATGIYLKYAKELVENGEAYYCFCTKERLETLKSAVGEEDGESKEITKYDKHCLHLSKEEVEANLAAGMPYVIRQNMPTEGTTSFTDAIYGTITVENSELDDMILIKSDGFPTYNFANVIDDHFMEITHVVRGNEYLSSTPKYTRLYKAFGWEEPVYIHCPLITNEEHQKLSKRSGHSSFEDLIEQGFVTEAIVNFIALLGWSSTTNEEIFSLEELVREFDYTHINKSPSVFDMNKLRWMNGEYIKRMDSEKYYEYALPQIKKVVTKDYDLKFIADLVKTRIETFLDIAEMIDFFDELPEYDIAMYTHKKMKTDSENSLKVLQDVLPRFEELTCYSVSSIESVLMGYIAENGIKNGQGLWPVRTAVSGKQSTPGGAYEIMSILGKEESLRRIRIAIDKLSSSL.

Positions 10-20 (PSPTGRMHVGN) match the 'HIGH' region motif. Positions 109, 111, 140, and 142 each coordinate Zn(2+). A 'KMSKS' region motif is present at residues 257-261 (KLSKR). K260 contributes to the ATP binding site.

It belongs to the class-I aminoacyl-tRNA synthetase family. Glutamate--tRNA ligase type 1 subfamily. In terms of assembly, monomer. The cofactor is Zn(2+).

It is found in the cytoplasm. It carries out the reaction tRNA(Glu) + L-glutamate + ATP = L-glutamyl-tRNA(Glu) + AMP + diphosphate. Its function is as follows. Catalyzes the attachment of glutamate to tRNA(Glu) in a two-step reaction: glutamate is first activated by ATP to form Glu-AMP and then transferred to the acceptor end of tRNA(Glu). The protein is Glutamate--tRNA ligase of Lachnoclostridium phytofermentans (strain ATCC 700394 / DSM 18823 / ISDg) (Clostridium phytofermentans).